The chain runs to 566 residues: Membrane protein insertase YidC (566 aa).

Residues 7-27 form a helical membrane-spanning segment; sequence ILIVALAIVSYVMVLKWNQDY. A disordered region spans residues 38-72; sequence ASSTTAPGLPDAPTGTSAANDDIPRAASDTTAPAE. Helical transmembrane passes span 347 to 367, 373 to 393, 443 to 463, 474 to 494, and 521 to 541; these read LELT…FWLL, LVGN…GIFF, LGGC…YWVL, FMLW…PIIM, and PIIF…YWVV.

Belongs to the OXA1/ALB3/YidC family. Type 1 subfamily. In terms of assembly, interacts with the Sec translocase complex via SecD. Specifically interacts with transmembrane segments of nascent integral membrane proteins during membrane integration.

Its subcellular location is the cell inner membrane. Required for the insertion and/or proper folding and/or complex formation of integral membrane proteins into the membrane. Involved in integration of membrane proteins that insert both dependently and independently of the Sec translocase complex, as well as at least some lipoproteins. Aids folding of multispanning membrane proteins. The polypeptide is Membrane protein insertase YidC (Pseudomonas fluorescens (strain ATCC BAA-477 / NRRL B-23932 / Pf-5)).